A 293-amino-acid polypeptide reads, in one-letter code: Probable endonuclease 4 (293 aa).

Zn(2+) is bound by residues His-78, His-118, Glu-154, Asp-188, His-191, His-225, Asp-238, His-240, and Glu-270.

It belongs to the AP endonuclease 2 family. Requires Zn(2+) as cofactor.

The catalysed reaction is Endonucleolytic cleavage to 5'-phosphooligonucleotide end-products.. Its function is as follows. Endonuclease IV plays a role in DNA repair. It cleaves phosphodiester bonds at apurinic or apyrimidinic (AP) sites, generating a 3'-hydroxyl group and a 5'-terminal sugar phosphate. This Vibrio vulnificus (strain CMCP6) protein is Probable endonuclease 4.